A 545-amino-acid polypeptide reads, in one-letter code: Threonine--tRNA ligase catalytic subunit (545 aa).

Residues 139–433 form a catalytic region; the sequence is DHRLIGEKLD…LLEHFKGKLP (295 aa). The Zn(2+) site is built by C231, H282, and H410.

The protein belongs to the class-II aminoacyl-tRNA synthetase family. As to quaternary structure, homodimer. Probably interacts with its editing subunit. Zn(2+) serves as cofactor.

Its subcellular location is the cytoplasm. The catalysed reaction is tRNA(Thr) + L-threonine + ATP = L-threonyl-tRNA(Thr) + AMP + diphosphate + H(+). Its function is as follows. Catalyzes the attachment of threonine to tRNA(Thr) in a two-step reaction: L-threonine is first activated by ATP to form Thr-AMP and then transferred to the acceptor end of tRNA(Thr). Also activates L-serine and transfers it to tRNA(Thr) but cannot deacylate incorrectly charged amino acid; unlike most archaea the editing function is found in a freestanding protein. The chain is Threonine--tRNA ligase catalytic subunit from Saccharolobus islandicus (strain L.S.2.15 / Lassen #1) (Sulfolobus islandicus).